We begin with the raw amino-acid sequence, 304 residues long: N-acetyl-D-glucosamine kinase (304 aa).

ATP-binding positions include 4-11 (GFDIGGTK) and 133-140 (GFGGGLIF). The Zn(2+) site is built by His157, Cys178, Cys180, and Cys185.

The protein belongs to the ROK (NagC/XylR) family. NagK subfamily.

It carries out the reaction N-acetyl-D-glucosamine + ATP = N-acetyl-D-glucosamine 6-phosphate + ADP + H(+). The protein operates within cell wall biogenesis; peptidoglycan recycling. Functionally, catalyzes the phosphorylation of N-acetyl-D-glucosamine (GlcNAc) derived from cell-wall degradation, yielding GlcNAc-6-P. This is N-acetyl-D-glucosamine kinase from Pasteurella multocida (strain Pm70).